A 497-amino-acid polypeptide reads, in one-letter code: UPF0371 protein DIP2346 (497 aa).

It belongs to the UPF0371 family.

In Corynebacterium diphtheriae (strain ATCC 700971 / NCTC 13129 / Biotype gravis), this protein is UPF0371 protein DIP2346.